A 394-amino-acid polypeptide reads, in one-letter code: Tryptophan synthase beta chain (394 aa).

Lys-84 is subject to N6-(pyridoxal phosphate)lysine.

Belongs to the TrpB family. As to quaternary structure, tetramer of two alpha and two beta chains. It depends on pyridoxal 5'-phosphate as a cofactor.

The catalysed reaction is (1S,2R)-1-C-(indol-3-yl)glycerol 3-phosphate + L-serine = D-glyceraldehyde 3-phosphate + L-tryptophan + H2O. The protein operates within amino-acid biosynthesis; L-tryptophan biosynthesis; L-tryptophan from chorismate: step 5/5. The beta subunit is responsible for the synthesis of L-tryptophan from indole and L-serine. This Clostridium acetobutylicum (strain ATCC 824 / DSM 792 / JCM 1419 / IAM 19013 / LMG 5710 / NBRC 13948 / NRRL B-527 / VKM B-1787 / 2291 / W) protein is Tryptophan synthase beta chain.